A 291-amino-acid polypeptide reads, in one-letter code: tRNA U34 carboxymethyltransferase (291 aa).

Residues Lys-61, Trp-75, Lys-80, Gly-100, 122–124, 149–150, Tyr-169, and Arg-284 each bind carboxy-S-adenosyl-L-methionine; these read DPS and VE.

The protein belongs to the class I-like SAM-binding methyltransferase superfamily. CmoB family. Homotetramer.

The catalysed reaction is carboxy-S-adenosyl-L-methionine + 5-hydroxyuridine(34) in tRNA = 5-carboxymethoxyuridine(34) in tRNA + S-adenosyl-L-homocysteine + H(+). Its function is as follows. Catalyzes carboxymethyl transfer from carboxy-S-adenosyl-L-methionine (Cx-SAM) to 5-hydroxyuridine (ho5U) to form 5-carboxymethoxyuridine (cmo5U) at position 34 in tRNAs. The protein is tRNA U34 carboxymethyltransferase of Campylobacter jejuni (strain RM1221).